An 84-amino-acid polypeptide reads, in one-letter code: M-myrmeciitoxin-Mb2a (84 aa).

A signal peptide spans 1–21 (MKLSCLLLTLAIIFVLTIVHA). A propeptide spanning residues 22 to 48 (PNVKAKALADPESDAVGFADAVGEADP) is cleaved from the precursor.

This sequence belongs to the formicidae venom precursor-01 superfamily. Ant pilosulin family. As to expression, expressed by the venom gland.

It localises to the secreted. In terms of biological role, shows activity against E.coli and S.aureus (MIC&lt;6.25 uM), moderate activity against P.aeruginosa (MIC&lt;25 uM), weak activity against B.subtilis (MIC&lt;50 uM), and has no effect against L.garvieae, C.albicans, and S.cerevisiae. Has no hemolytic nor cytolytic activity. Causes an IgE-independent histamine release. The protein is M-myrmeciitoxin-Mb2a of Myrmecia banksi (Jack jumper ant).